The following is a 523-amino-acid chain: Cytochrome P450 52A3-B (523 aa).

A helical transmembrane segment spans residues 17–34 (WYTILFGAAFTYFLSIAL). Cys471 is a binding site for heme.

Belongs to the cytochrome P450 family. Heme is required as a cofactor.

The protein localises to the membrane. Its function is as follows. Together with an NADPH cytochrome P450 the enzyme system catalyzes the terminal hydroxylation as the first step in the assimilation of alkanes and fatty acids. The polypeptide is Cytochrome P450 52A3-B (CYP52A3-B) (Candida maltosa (Yeast)).